A 52-amino-acid polypeptide reads, in one-letter code: Alpha-crystallin B chain (52 aa).

Belongs to the small heat shock protein (HSP20) family. In terms of assembly, homodimer. Aggregates with homologous proteins, including alpha-A-crystallin and the small heat shock protein HSPB1, to form large heteromeric complexes.

May contribute to the transparency and refractive index of the lens. The polypeptide is Alpha-crystallin B chain (CRYAB) (Eudromia elegans (Elegant crested-tinamou)).